A 158-amino-acid polypeptide reads, in one-letter code: Putative 4-hydroxy-4-methyl-2-oxoglutarate aldolase (158 aa).

Substrate contacts are provided by residues 75–78 (GDLI) and Arg97. A divalent metal cation is bound at residue Asp98.

Belongs to the class II aldolase/RraA-like family. Homotrimer. The cofactor is a divalent metal cation.

The catalysed reaction is 4-hydroxy-4-methyl-2-oxoglutarate = 2 pyruvate. It catalyses the reaction oxaloacetate + H(+) = pyruvate + CO2. In terms of biological role, catalyzes the aldol cleavage of 4-hydroxy-4-methyl-2-oxoglutarate (HMG) into 2 molecules of pyruvate. Also contains a secondary oxaloacetate (OAA) decarboxylase activity due to the common pyruvate enolate transition state formed following C-C bond cleavage in the retro-aldol and decarboxylation reactions. This Saccharopolyspora erythraea (strain ATCC 11635 / DSM 40517 / JCM 4748 / NBRC 13426 / NCIMB 8594 / NRRL 2338) protein is Putative 4-hydroxy-4-methyl-2-oxoglutarate aldolase.